A 224-amino-acid chain; its full sequence is MAAQNKAMSGNRMLVFVPPHPLIKHWVSVLRNEQTPCPIFRNAMSELGRLLMYEASRDWLPIITGEIQSPMGVASVEFVDPREPVAIVPILRAGLALAEHASSILPATKTYHLGISRNEETLQPSVYLNKLPDKFPEGSRVIVVDPMLATGGTIVAAIDLIKERGVDNSQIKVICAVGAPPALQKLSEKFPGLHVYAGILDPTVNDKGFIIPGLGDAGDRSFGT.

Arg-92 serves as a coordination point for 5-phospho-alpha-D-ribose 1-diphosphate. GTP is bound at residue Lys-109. 5-phospho-alpha-D-ribose 1-diphosphate-binding positions include Arg-117 and 145–153 (DPMLATGGT). Residues Ile-210 and 215–217 (GDA) each bind uracil. Residue Asp-216 participates in 5-phospho-alpha-D-ribose 1-diphosphate binding.

This sequence belongs to the UPRTase family. It depends on Mg(2+) as a cofactor.

The enzyme catalyses UMP + diphosphate = 5-phospho-alpha-D-ribose 1-diphosphate + uracil. It participates in pyrimidine metabolism; UMP biosynthesis via salvage pathway; UMP from uracil: step 1/1. With respect to regulation, allosterically activated by GTP. Functionally, catalyzes the conversion of uracil and 5-phospho-alpha-D-ribose 1-diphosphate (PRPP) to UMP and diphosphate. In Nicotiana tabacum (Common tobacco), this protein is Uracil phosphoribosyltransferase (UPP).